We begin with the raw amino-acid sequence, 88 residues long: uncharacterized protein (88 aa).

The N-terminal stretch at 1-22 is a signal peptide; it reads MGLTLKEHAEVCMALAESSASA.

This is an uncharacterized protein from Haemophilus influenzae (strain ATCC 51907 / DSM 11121 / KW20 / Rd).